The primary structure comprises 318 residues: Death effector domain-containing protein (318 aa).

The DED domain occupies 25 to 103; the sequence is SLHRMFDIVG…RHDLLPYVTL (79 aa). The interval 128-191 is disordered; that stretch reads PRALSDPEPR…SVTPDPKEKQ (64 aa).

As to quaternary structure, interacts with CASP8, CASP10, KRT8, KRT18, CASP3 and FADD. Homodimerizes and heterodimerizes with DEDD2. Exists predominantly in a mono- or diubiquitinated form. Widely expressed with highest levels in testis. Within the testis, highly expressed in germ cells but not expressed in Sertoli cells.

It is found in the cytoplasm. It localises to the nucleus. The protein localises to the nucleolus. Functionally, a scaffold protein that directs CASP3 to certain substrates and facilitates their ordered degradation during apoptosis. May also play a role in mediating CASP3 cleavage of KRT18. Regulates degradation of intermediate filaments during apoptosis. May play a role in the general transcription machinery in the nucleus and might be an important regulator of the activity of GTF3C3. Inhibits DNA transcription in vitro. The sequence is that of Death effector domain-containing protein (Dedd) from Rattus norvegicus (Rat).